The following is a 339-amino-acid chain: Ketol-acid reductoisomerase (NADP(+)) (339 aa).

One can recognise a KARI N-terminal Rossmann domain in the interval 1 to 182; it reads MRVYYDRDAD…GGGRAGIIET (182 aa). Residues 24–27, Arg48, Ser51, Ser53, and 83–86 each bind NADP(+); these read YGSQ and DELQ. The active site involves His108. Gly134 provides a ligand contact to NADP(+). The 146-residue stretch at 183–328 folds into the KARI C-terminal knotted domain; that stretch reads TFKEECETDL…EKLREMMPWI (146 aa). Asp191, Glu195, Glu227, and Glu231 together coordinate Mg(2+). Ser252 is a binding site for substrate.

This sequence belongs to the ketol-acid reductoisomerase family. The cofactor is Mg(2+).

It carries out the reaction (2R)-2,3-dihydroxy-3-methylbutanoate + NADP(+) = (2S)-2-acetolactate + NADPH + H(+). The enzyme catalyses (2R,3R)-2,3-dihydroxy-3-methylpentanoate + NADP(+) = (S)-2-ethyl-2-hydroxy-3-oxobutanoate + NADPH + H(+). It participates in amino-acid biosynthesis; L-isoleucine biosynthesis; L-isoleucine from 2-oxobutanoate: step 2/4. Its pathway is amino-acid biosynthesis; L-valine biosynthesis; L-valine from pyruvate: step 2/4. Functionally, involved in the biosynthesis of branched-chain amino acids (BCAA). Catalyzes an alkyl-migration followed by a ketol-acid reduction of (S)-2-acetolactate (S2AL) to yield (R)-2,3-dihydroxy-isovalerate. In the isomerase reaction, S2AL is rearranged via a Mg-dependent methyl migration to produce 3-hydroxy-3-methyl-2-ketobutyrate (HMKB). In the reductase reaction, this 2-ketoacid undergoes a metal-dependent reduction by NADPH to yield (R)-2,3-dihydroxy-isovalerate. This chain is Ketol-acid reductoisomerase (NADP(+)), found in Azorhizobium caulinodans (strain ATCC 43989 / DSM 5975 / JCM 20966 / LMG 6465 / NBRC 14845 / NCIMB 13405 / ORS 571).